A 257-amino-acid polypeptide reads, in one-letter code: Zinc import ATP-binding protein ZnuC (257 aa).

An ABC transporter domain is found at 5–220 (VELQSVTVTF…PSYVALFGQQ (216 aa)). An ATP-binding site is contributed by 37-44 (GPNGAGKS). Residues 234-257 (HEHDLAGSPVGPCQHNKQHGHDNA) form a disordered region.

It belongs to the ABC transporter superfamily. Zinc importer (TC 3.A.1.15.5) family. The complex is composed of two ATP-binding proteins (ZnuC), two transmembrane proteins (ZnuB) and a solute-binding protein (ZnuA).

It is found in the cell inner membrane. It catalyses the reaction Zn(2+)(out) + ATP(in) + H2O(in) = Zn(2+)(in) + ADP(in) + phosphate(in) + H(+)(in). In terms of biological role, part of the ABC transporter complex ZnuABC involved in zinc import. Responsible for energy coupling to the transport system. The sequence is that of Zinc import ATP-binding protein ZnuC from Photobacterium profundum (strain SS9).